A 101-amino-acid polypeptide reads, in one-letter code: MFDQTTHTEAHPLTVGKIETANGTIKPQLLRDAVKRAVSNFFAQLDGQEAQEVYEMVLCEVEAPLLDIIMQHTRGNQTRAANMLGINRGTLRKKLKKYGMN.

Positions 77 to 96 (QTRAANMLGINRGTLRKKLK) form a DNA-binding region, H-T-H motif.

Belongs to the transcriptional regulatory Fis family. Homodimer.

Its function is as follows. Activates ribosomal RNA transcription. Plays a direct role in upstream activation of rRNA promoters. The sequence is that of DNA-binding protein Fis from Shewanella amazonensis (strain ATCC BAA-1098 / SB2B).